A 610-amino-acid polypeptide reads, in one-letter code: UvrABC system protein C (610 aa).

One can recognise a GIY-YIG domain in the interval 16-94 (HQPGVYRMYN…IKQYLPKYNV (79 aa)). One can recognise a UVR domain in the interval 204-239 (NQVLELLVQKMEIASQQLKFEDAAKFRDQIQAIRRV).

This sequence belongs to the UvrC family. As to quaternary structure, interacts with UvrB in an incision complex.

The protein resides in the cytoplasm. In terms of biological role, the UvrABC repair system catalyzes the recognition and processing of DNA lesions. UvrC both incises the 5' and 3' sides of the lesion. The N-terminal half is responsible for the 3' incision and the C-terminal half is responsible for the 5' incision. This Vibrio vulnificus (strain CMCP6) protein is UvrABC system protein C.